The chain runs to 200 residues: ATP synthase subunit s, mitochondrial (200 aa).

A mitochondrion-targeting transit peptide spans 1-25; it reads MMMFGKISRQLCSLKKIPWSCDSRY. An N-terminal domain region spans residues 1-61; sequence MMMFGKISRQ…SEWLLRCGAK (61 aa). Glycine 59 serves as a coordination point for Mg(2+). LRR repeat units follow at residues 62-87, 88-116, 117-141, and 142-173; these read VRYC…RYKI, QAID…KITL, CKCH…KSLL, and ELEI…LSDL. Threonine 93 contributes to the Mg(2+) binding site.

The protein belongs to the ATP synthase subunit s family. In terms of assembly, homotetramer. Associates with ATP synthase.

It is found in the mitochondrion. The protein localises to the mitochondrion inner membrane. Its function is as follows. Involved in regulation of mitochondrial membrane ATP synthase. Necessary for H(+) conduction of ATP synthase. Facilitates energy-driven catalysis of ATP synthesis by blocking a proton leak through an alternative proton exit pathway. The sequence is that of ATP synthase subunit s, mitochondrial (Dmac2l) from Mus musculus (Mouse).